Reading from the N-terminus, the 486-residue chain is Galactose-3-O-sulfotransferase 4 (486 aa).

Residues 1-18 (MGPLSPARTLRLWGPRSL) lie on the Cytoplasmic side of the membrane. The chain crosses the membrane as a helical; Signal-anchor for type II membrane protein span at residues 19–39 (GVALGVFMTIGFALQLLGGPF). Residues 40–486 (QRRLPGLQLR…PLKTSRPLSP (447 aa)) are Lumenal-facing. The N-linked (GlcNAc...) asparagine glycan is linked to N374.

The protein belongs to the galactose-3-O-sulfotransferase family. Requires Mn(2+) as cofactor. As to expression, expressed mainly in placenta, thymus, testis, ovary, spinal cord, trachea and adrenal gland and at low levels in brain, lung, spleen, prostate, small intestine, colon, stomach thyroid and lymph node.

The protein resides in the golgi apparatus. It localises to the golgi stack membrane. Its pathway is protein modification; carbohydrate sulfation. Catalyzes the transfer of sulfate to beta-1,3-linked galactose residues in O-linked glycoproteins. Good substrates include asialofetuin, Gal-beta-1,3-GalNAc and Gal-beta-1,3 (GlcNAc-beta-1,6)GalNAc. This is Galactose-3-O-sulfotransferase 4 (GAL3ST4) from Homo sapiens (Human).